The following is a 369-amino-acid chain: UDP-N-acetylglucosamine--N-acetylmuramyl-(pentapeptide) pyrophosphoryl-undecaprenol N-acetylglucosamine transferase (369 aa).

Residues T15–G17, N126, R169, S197, and Q299 contribute to the UDP-N-acetyl-alpha-D-glucosamine site.

This sequence belongs to the glycosyltransferase 28 family. MurG subfamily.

The protein localises to the cell inner membrane. It carries out the reaction di-trans,octa-cis-undecaprenyl diphospho-N-acetyl-alpha-D-muramoyl-L-alanyl-D-glutamyl-meso-2,6-diaminopimeloyl-D-alanyl-D-alanine + UDP-N-acetyl-alpha-D-glucosamine = di-trans,octa-cis-undecaprenyl diphospho-[N-acetyl-alpha-D-glucosaminyl-(1-&gt;4)]-N-acetyl-alpha-D-muramoyl-L-alanyl-D-glutamyl-meso-2,6-diaminopimeloyl-D-alanyl-D-alanine + UDP + H(+). Its pathway is cell wall biogenesis; peptidoglycan biosynthesis. Its function is as follows. Cell wall formation. Catalyzes the transfer of a GlcNAc subunit on undecaprenyl-pyrophosphoryl-MurNAc-pentapeptide (lipid intermediate I) to form undecaprenyl-pyrophosphoryl-MurNAc-(pentapeptide)GlcNAc (lipid intermediate II). The polypeptide is UDP-N-acetylglucosamine--N-acetylmuramyl-(pentapeptide) pyrophosphoryl-undecaprenol N-acetylglucosamine transferase (Methylorubrum extorquens (strain CM4 / NCIMB 13688) (Methylobacterium extorquens)).